Reading from the N-terminus, the 301-residue chain is N-acetylmuramic acid 6-phosphate etherase (301 aa).

Residues 57–220 (VVERLRAGGR…STISMVRLGK (164 aa)) form the SIS domain. The Proton donor role is filled by Glu-85. Residue Glu-116 is part of the active site.

The protein belongs to the GCKR-like family. MurNAc-6-P etherase subfamily. Homodimer.

It carries out the reaction N-acetyl-D-muramate 6-phosphate + H2O = N-acetyl-D-glucosamine 6-phosphate + (R)-lactate. It functions in the pathway amino-sugar metabolism; N-acetylmuramate degradation. Specifically catalyzes the cleavage of the D-lactyl ether substituent of MurNAc 6-phosphate, producing GlcNAc 6-phosphate and D-lactate. This chain is N-acetylmuramic acid 6-phosphate etherase, found in Rubrobacter xylanophilus (strain DSM 9941 / JCM 11954 / NBRC 16129 / PRD-1).